The sequence spans 228 residues: Octanoyltransferase (228 aa).

One can recognise a BPL/LPL catalytic domain in the interval 37-217 (AGGPDTLLLL…AVCDALDGRL (181 aa)). Residues 75–82 (RGGKITWH), 147–149 (AIG), and 160–162 (GFA) each bind substrate. The Acyl-thioester intermediate role is filled by C178.

The protein belongs to the LipB family.

It is found in the cytoplasm. It catalyses the reaction octanoyl-[ACP] + L-lysyl-[protein] = N(6)-octanoyl-L-lysyl-[protein] + holo-[ACP] + H(+). It participates in protein modification; protein lipoylation via endogenous pathway; protein N(6)-(lipoyl)lysine from octanoyl-[acyl-carrier-protein]: step 1/2. In terms of biological role, catalyzes the transfer of endogenously produced octanoic acid from octanoyl-acyl-carrier-protein onto the lipoyl domains of lipoate-dependent enzymes. Lipoyl-ACP can also act as a substrate although octanoyl-ACP is likely to be the physiological substrate. This is Octanoyltransferase from Mycolicibacterium smegmatis (strain ATCC 700084 / mc(2)155) (Mycobacterium smegmatis).